Reading from the N-terminus, the 516-residue chain is 3-phosphoshikimate 1-carboxyvinyltransferase, chloroplastic (516 aa).

The transit peptide at 1–72 (MAQINNMAQG…RISASVATAQ (72 aa)) directs the protein to the chloroplast. The 3-phosphoshikimate site is built by Lys95, Ser96, and Arg100. Phosphoenolpyruvate is bound at residue Lys95. The phosphoenolpyruvate site is built by Gly173 and Arg203. Residues Ser250, Ser251, Gln252, Ser278, Asp403, and Lys430 each contribute to the 3-phosphoshikimate site. Gln252 is a binding site for phosphoenolpyruvate. The active-site Proton acceptor is the Asp403. The phosphoenolpyruvate site is built by Arg434, Arg476, and Lys501.

The protein belongs to the EPSP synthase family. In terms of tissue distribution, mostly expressed in flower petals, and, to a lower extent, in roots, stems and anthers, but barely in leaves.

It is found in the plastid. Its subcellular location is the chloroplast. The catalysed reaction is 3-phosphoshikimate + phosphoenolpyruvate = 5-O-(1-carboxyvinyl)-3-phosphoshikimate + phosphate. It functions in the pathway metabolic intermediate biosynthesis; chorismate biosynthesis; chorismate from D-erythrose 4-phosphate and phosphoenolpyruvate: step 6/7. With respect to regulation, competitively inhibited by glyphosate. Its function is as follows. Catalyzes the transfer of the enolpyruvyl moiety of phosphoenolpyruvate (PEP) to the 5-hydroxyl of shikimate-3-phosphate (S3P) to produce enolpyruvyl shikimate-3-phosphate and inorganic phosphate. Involved in the accumulation of volatile benzoides in flowers, scent attracting pollinators (e.g. the night-active hawkmoth pollinator Manduca sexta). The sequence is that of 3-phosphoshikimate 1-carboxyvinyltransferase, chloroplastic from Petunia hybrida (Petunia).